Reading from the N-terminus, the 430-residue chain is Enolase (430 aa).

Gln-164 is a (2R)-2-phosphoglycerate binding site. Residue Glu-208 is the Proton donor of the active site. 3 residues coordinate Mg(2+): Asp-245, Glu-288, and Asp-315. Lys-340, Arg-369, Ser-370, and Lys-391 together coordinate (2R)-2-phosphoglycerate. The active-site Proton acceptor is the Lys-340.

Belongs to the enolase family. It depends on Mg(2+) as a cofactor.

It is found in the cytoplasm. The protein resides in the secreted. The protein localises to the cell surface. It carries out the reaction (2R)-2-phosphoglycerate = phosphoenolpyruvate + H2O. Its pathway is carbohydrate degradation; glycolysis; pyruvate from D-glyceraldehyde 3-phosphate: step 4/5. In terms of biological role, catalyzes the reversible conversion of 2-phosphoglycerate (2-PG) into phosphoenolpyruvate (PEP). It is essential for the degradation of carbohydrates via glycolysis. The sequence is that of Enolase from Pyrococcus furiosus (strain ATCC 43587 / DSM 3638 / JCM 8422 / Vc1).